The primary structure comprises 109 residues: Flagellar hook-basal body complex protein FliE 2 (109 aa).

This sequence belongs to the FliE family.

The protein localises to the bacterial flagellum basal body. The sequence is that of Flagellar hook-basal body complex protein FliE 2 (fliE2) from Bradyrhizobium diazoefficiens (strain JCM 10833 / BCRC 13528 / IAM 13628 / NBRC 14792 / USDA 110).